The chain runs to 236 residues: Biosynthetic peptidoglycan transglycosylase (236 aa).

Residues 20 to 40 form a helical membrane-spanning segment; that stretch reads LVFIVLSVLILPYALIGLYLL.

It belongs to the glycosyltransferase 51 family.

Its subcellular location is the cell inner membrane. It catalyses the reaction [GlcNAc-(1-&gt;4)-Mur2Ac(oyl-L-Ala-gamma-D-Glu-L-Lys-D-Ala-D-Ala)](n)-di-trans,octa-cis-undecaprenyl diphosphate + beta-D-GlcNAc-(1-&gt;4)-Mur2Ac(oyl-L-Ala-gamma-D-Glu-L-Lys-D-Ala-D-Ala)-di-trans,octa-cis-undecaprenyl diphosphate = [GlcNAc-(1-&gt;4)-Mur2Ac(oyl-L-Ala-gamma-D-Glu-L-Lys-D-Ala-D-Ala)](n+1)-di-trans,octa-cis-undecaprenyl diphosphate + di-trans,octa-cis-undecaprenyl diphosphate + H(+). Its pathway is cell wall biogenesis; peptidoglycan biosynthesis. Peptidoglycan polymerase that catalyzes glycan chain elongation from lipid-linked precursors. This Rhizobium meliloti (strain 1021) (Ensifer meliloti) protein is Biosynthetic peptidoglycan transglycosylase.